Here is an 86-residue protein sequence, read N- to C-terminus: Small ribosomal subunit protein bS20 (86 aa).

Residues 1–11 (MANIKSAKKRA) show a composition bias toward basic residues. The disordered stretch occupies residues 1 to 26 (MANIKSAKKRAITSEKNRQHNASRRS).

Belongs to the bacterial ribosomal protein bS20 family.

Its function is as follows. Binds directly to 16S ribosomal RNA. The protein is Small ribosomal subunit protein bS20 of Pseudoalteromonas translucida (strain TAC 125).